Here is a 214-residue protein sequence, read N- to C-terminus: MELYLDTANVDEIKEIASYGLVDGVTTNPSLIAKSGRSFKEVIKEICSIVSGPVSAEVLSTKFDGMMKEALELVEIAENVVIKVPLIPEGLKTVVELTKRNIPTNVTLCFSAPQALLAAKAGATFISPFIGRVDDTSWDGMELISEIREIYDNYGYDTRILAASIRGPIHLKESALRGADCATMPHSAFLQLFKHPLTDIGLEKFLEDSKKLKW.

Lys-83 acts as the Schiff-base intermediate with substrate in catalysis.

It belongs to the transaldolase family. Type 3B subfamily.

The protein resides in the cytoplasm. The enzyme catalyses D-sedoheptulose 7-phosphate + D-glyceraldehyde 3-phosphate = D-erythrose 4-phosphate + beta-D-fructose 6-phosphate. It participates in carbohydrate degradation; pentose phosphate pathway; D-glyceraldehyde 3-phosphate and beta-D-fructose 6-phosphate from D-ribose 5-phosphate and D-xylulose 5-phosphate (non-oxidative stage): step 2/3. In terms of biological role, transaldolase is important for the balance of metabolites in the pentose-phosphate pathway. The sequence is that of Probable transaldolase from Leptospira interrogans serogroup Icterohaemorrhagiae serovar copenhageni (strain Fiocruz L1-130).